The sequence spans 315 residues: DNA-directed RNA polymerase subunit alpha (315 aa).

The segment at 1–228 (MLEIEKPKIE…EHLRLFIGLT (228 aa)) is alpha N-terminal domain (alpha-NTD). The alpha C-terminal domain (alpha-CTD) stretch occupies residues 246–315 (DKILEMTIEE…LGLSLRQEDE (70 aa)).

It belongs to the RNA polymerase alpha chain family. In terms of assembly, homodimer. The RNAP catalytic core consists of 2 alpha, 1 beta, 1 beta' and 1 omega subunit. When a sigma factor is associated with the core the holoenzyme is formed, which can initiate transcription.

It carries out the reaction RNA(n) + a ribonucleoside 5'-triphosphate = RNA(n+1) + diphosphate. DNA-dependent RNA polymerase catalyzes the transcription of DNA into RNA using the four ribonucleoside triphosphates as substrates. This chain is DNA-directed RNA polymerase subunit alpha, found in Desulforamulus reducens (strain ATCC BAA-1160 / DSM 100696 / MI-1) (Desulfotomaculum reducens).